The following is a 208-amino-acid chain: Interleukin-6 (208 aa).

The first 20 residues, 1-20 (MNSLSTIAFSLGLLLVTATA), serve as a signal peptide directing secretion. A disulfide bond links cysteine 67 and cysteine 73. Position 76 is a phosphoserine (serine 76). A disulfide bond links cysteine 96 and cysteine 106. Asparagine 167 carries an N-linked (GlcNAc...) asparagine glycan.

Belongs to the IL-6 superfamily. As to quaternary structure, component of a hexamer of two molecules each of IL6, IL6R and IL6ST; first binds to IL6R to associate with the signaling subunit IL6ST. Interacts with IL6R (via the N-terminal ectodomain); this interaction may be affected by IL6R-binding with SORL1, hence decreasing IL6 cis signaling. Interacts with SORL1 (via the N-terminal ectodomain); this interaction leads to IL6 internalization and lysosomal degradation. May form a trimeric complex with the soluble SORL1 ectodomain and soluble IL6R receptor; this interaction might stabilize circulating IL6, hence promoting IL6 trans signaling.

It localises to the secreted. Functionally, cytokine with a wide variety of biological functions in immunity, tissue regeneration, and metabolism. Binds to IL6R, then the complex associates to the signaling subunit IL6ST/gp130 to trigger the intracellular IL6-signaling pathway. The interaction with the membrane-bound IL6R and IL6ST stimulates 'classic signaling', whereas the binding of IL6 and soluble IL6R to IL6ST stimulates 'trans-signaling'. Alternatively, 'cluster signaling' occurs when membrane-bound IL6:IL6R complexes on transmitter cells activate IL6ST receptors on neighboring receiver cells. IL6 is a potent inducer of the acute phase response. Rapid production of IL6 contributes to host defense during infection and tissue injury, but excessive IL6 synthesis is involved in disease pathology. In the innate immune response, is synthesized by myeloid cells, such as macrophages and dendritic cells, upon recognition of pathogens through toll-like receptors (TLRs) at the site of infection or tissue injury. In the adaptive immune response, is required for the differentiation of B cells into immunoglobulin-secreting cells. Plays a major role in the differentiation of CD4(+) T cell subsets. Essential factor for the development of T follicular helper (Tfh) cells that are required for the induction of germinal-center formation. Required to drive naive CD4(+) T cells to the Th17 lineage. Also required for proliferation of myeloma cells and the survival of plasmablast cells. In terms of biological role, acts as an essential factor in bone homeostasis and on vessels directly or indirectly by induction of VEGF, resulting in increased angiogenesis activity and vascular permeability. Induces, through 'trans-signaling' and synergistically with IL1B and TNF, the production of VEGF. Involved in metabolic controls, is discharged into the bloodstream after muscle contraction increasing lipolysis and improving insulin resistance. 'Trans-signaling' in central nervous system also regulates energy and glucose homeostasis. Mediates, through GLP-1, crosstalk between insulin-sensitive tissues, intestinal L cells and pancreatic islets to adapt to changes in insulin demand. Also acts as a myokine. Plays a protective role during liver injury, being required for maintenance of tissue regeneration. Also has a pivotal role in iron metabolism by regulating HAMP/hepcidin expression upon inflammation or bacterial infection. Through activation of IL6ST-YAP-NOTCH pathway, induces inflammation-induced epithelial regeneration. The chain is Interleukin-6 (IL6) from Delphinapterus leucas (Beluga whale).